The primary structure comprises 501 residues: ATP synthase subunit alpha (501 aa).

169-176 (GDRQTGKT) is an ATP binding site.

Belongs to the ATPase alpha/beta chains family. In terms of assembly, F-type ATPases have 2 components, CF(1) - the catalytic core - and CF(0) - the membrane proton channel. CF(1) has five subunits: alpha(3), beta(3), gamma(1), delta(1), epsilon(1). CF(0) has three main subunits: a(1), b(2) and c(9-12). The alpha and beta chains form an alternating ring which encloses part of the gamma chain. CF(1) is attached to CF(0) by a central stalk formed by the gamma and epsilon chains, while a peripheral stalk is formed by the delta and b chains.

It is found in the cell membrane. The enzyme catalyses ATP + H2O + 4 H(+)(in) = ADP + phosphate + 5 H(+)(out). Its function is as follows. Produces ATP from ADP in the presence of a proton gradient across the membrane. The alpha chain is a regulatory subunit. This is ATP synthase subunit alpha from Streptococcus equi subsp. equi (strain 4047).